A 108-amino-acid polypeptide reads, in one-letter code: UPF0235 protein APE_0182.1 (108 aa).

It belongs to the UPF0235 family.

This is UPF0235 protein APE_0182.1 from Aeropyrum pernix (strain ATCC 700893 / DSM 11879 / JCM 9820 / NBRC 100138 / K1).